A 238-amino-acid polypeptide reads, in one-letter code: Small ribosomal subunit protein eS4 (238 aa).

An S4 RNA-binding domain is found at 38 to 109; it reads IPLALVIRDV…DERSYYALVP (72 aa).

It belongs to the eukaryotic ribosomal protein eS4 family.

In Pyrobaculum neutrophilum (strain DSM 2338 / JCM 9278 / NBRC 100436 / V24Sta) (Thermoproteus neutrophilus), this protein is Small ribosomal subunit protein eS4.